A 72-amino-acid polypeptide reads, in one-letter code: uncharacterized protein (72 aa).

Its subcellular location is the plastid. It is found in the chloroplast. This is an uncharacterized protein from Oenothera berteroana (Bertero's evening primrose).